The sequence spans 101 residues: NAD(P)H-quinone oxidoreductase subunit 4L, chloroplastic (101 aa).

3 helical membrane passes run 2–22 (MLEHVLVLSAYLFSIGIYGLI), 32–52 (MCLELILNAVNMNLVTFSDLF), and 61–81 (IFSIFVIAIAAAEAAIGPAIV).

Belongs to the complex I subunit 4L family. NDH is composed of at least 16 different subunits, 5 of which are encoded in the nucleus.

The protein resides in the plastid. The protein localises to the chloroplast thylakoid membrane. The catalysed reaction is a plastoquinone + NADH + (n+1) H(+)(in) = a plastoquinol + NAD(+) + n H(+)(out). It catalyses the reaction a plastoquinone + NADPH + (n+1) H(+)(in) = a plastoquinol + NADP(+) + n H(+)(out). Its function is as follows. NDH shuttles electrons from NAD(P)H:plastoquinone, via FMN and iron-sulfur (Fe-S) centers, to quinones in the photosynthetic chain and possibly in a chloroplast respiratory chain. The immediate electron acceptor for the enzyme in this species is believed to be plastoquinone. Couples the redox reaction to proton translocation, and thus conserves the redox energy in a proton gradient. The protein is NAD(P)H-quinone oxidoreductase subunit 4L, chloroplastic of Chloranthus spicatus (Chulantree).